Reading from the N-terminus, the 267-residue chain is Mitochondrial S-adenosylmethionine carrier protein (267 aa).

3 Solcar repeats span residues 4 to 77 (REFT…TKSV), 86 to 168 (LAPI…LKAV), and 177 to 265 (LDSW…VRRT). 6 helical membrane passes run 5 to 25 (EFTA…LTLF), 49 to 69 (IYAG…AFFV), 85 to 105 (NLAP…ACLI), 142 to 162 (RGYG…FPLW), 182 to 202 (AAVC…PLDV), and 238 to 258 (FAGS…FLGA).

This sequence belongs to the mitochondrial carrier (TC 2.A.29) family.

The protein localises to the mitochondrion inner membrane. It carries out the reaction S-adenosyl-L-homocysteine(out) + S-adenosyl-L-methionine(in) = S-adenosyl-L-homocysteine(in) + S-adenosyl-L-methionine(out). Mitochondrial S-adenosyl-L-methionine/S-adenosyl-L-homocysteine antiporter. Mediates the exchange of cytosolic S-adenosyl-L-methionine, the predominant methyl-group donor for macromolecule methylation processes, for mitochondrial S-adenosylhomocysteine(SAH), a by-product of methylation reactions. The protein is Mitochondrial S-adenosylmethionine carrier protein (slc25a26) of Danio rerio (Zebrafish).